The following is a 534-amino-acid chain: NEDD8-activating enzyme E1 regulatory subunit (534 aa).

At alanine 2 the chain carries N-acetylalanine. N6-acetyllysine is present on residues lysine 6 and lysine 341. Residues 331-344 form an interaction with UBA3 region; the sequence is DMIADSGKYIKLQN.

This sequence belongs to the ubiquitin-activating E1 family. ULA1 subfamily. As to quaternary structure, heterodimer of UBA3 and NAE1. The complex binds NEDD8 and UBE2M. Binds APP and TP53BP2. Ubiquitinated by TRIP12, leading to its degradation by the proteasome. In terms of tissue distribution, ubiquitous in fetal tissues. Expressed throughout the adult brain.

It localises to the cell membrane. It participates in protein modification; protein neddylation. With respect to regulation, binding of TP53BP2 to the regulatory subunit NAE1 decreases neddylation activity. Its function is as follows. Regulatory subunit of the dimeric UBA3-NAE1 E1 enzyme. E1 activates NEDD8 by first adenylating its C-terminal glycine residue with ATP, thereafter linking this residue to the side chain of the catalytic cysteine, yielding a NEDD8-UBA3 thioester and free AMP. E1 finally transfers NEDD8 to the catalytic cysteine of UBE2M. Necessary for cell cycle progression through the S-M checkpoint. Overexpression of NAE1 causes apoptosis through deregulation of NEDD8 conjugation. The covalent attachment of NEDD8 to target proteins is known as 'neddylation' and the process is involved in the regulation of cell growth, viability and development. This is NEDD8-activating enzyme E1 regulatory subunit (NAE1) from Homo sapiens (Human).